Consider the following 263-residue polypeptide: 3'-5' ssDNA/RNA exonuclease TatD (263 aa).

Residues Glu91, His127, and His152 each coordinate a divalent metal cation.

It belongs to the metallo-dependent hydrolases superfamily. TatD-type hydrolase family. TatD subfamily. In terms of assembly, monomer. Mg(2+) serves as cofactor.

Its subcellular location is the cytoplasm. 3'-5' exonuclease that prefers single-stranded DNA and RNA. May play a role in the H(2)O(2)-induced DNA damage repair. The polypeptide is 3'-5' ssDNA/RNA exonuclease TatD (Klebsiella pneumoniae (strain 342)).